A 182-amino-acid chain; its full sequence is MPLLNTITTPYAEAFLQVAESKKEVEKIIAQAKSILQLWDESSELREAMGSPVLEVESKKAALEKIFSGKVTPSFLNFMKLLAERQRIGFLNSVLERLLELYRAQRNIALATVTSATPLNEDQQAALLKNVQSVAGTNNLELNLKVDPDLIGGFVVRVGSKVIDASLSGQVRRMGLELAKVT.

The protein belongs to the ATPase delta chain family. As to quaternary structure, F-type ATPases have 2 components, F(1) - the catalytic core - and F(0) - the membrane proton channel. F(1) has five subunits: alpha(3), beta(3), gamma(1), delta(1), epsilon(1). CF(0) has four main subunits: a(1), b(1), b'(1) and c(10-14). The alpha and beta chains form an alternating ring which encloses part of the gamma chain. F(1) is attached to F(0) by a central stalk formed by the gamma and epsilon chains, while a peripheral stalk is formed by the delta, b and b' chains.

It localises to the cellular thylakoid membrane. In terms of biological role, f(1)F(0) ATP synthase produces ATP from ADP in the presence of a proton or sodium gradient. F-type ATPases consist of two structural domains, F(1) containing the extramembraneous catalytic core and F(0) containing the membrane proton channel, linked together by a central stalk and a peripheral stalk. During catalysis, ATP synthesis in the catalytic domain of F(1) is coupled via a rotary mechanism of the central stalk subunits to proton translocation. Its function is as follows. This protein is part of the stalk that links CF(0) to CF(1). It either transmits conformational changes from CF(0) to CF(1) or is implicated in proton conduction. The sequence is that of ATP synthase subunit delta from Prochlorococcus marinus (strain MIT 9211).